We begin with the raw amino-acid sequence, 78 residues long: Ferredoxin 7Fe (78 aa).

2 4Fe-4S ferredoxin-type domains span residues 2–29 (AYVITEPCIGTKDASCVEVCPVDCIHEG) and 31–60 (DQYYIDPDVCIDCGACEAVCPVSAIYHEDF). [3Fe-4S] cluster-binding residues include C9 and C17. [4Fe-4S] cluster is bound by residues C21, C40, C43, and C46. C50 lines the [3Fe-4S] cluster pocket.

In terms of assembly, monomer. The cofactor is [4Fe-4S] cluster. [3Fe-4S] cluster serves as cofactor.

This chain is Ferredoxin 7Fe (fdxA), found in Hydrogenibacillus schlegelii (Bacillus schlegelii).